The sequence spans 427 residues: Serine hydroxymethyltransferase (427 aa).

120 to 122 (GHI) is a (6S)-5,6,7,8-tetrahydrofolate binding site. Lysine 226 is subject to N6-(pyridoxal phosphate)lysine.

The protein belongs to the SHMT family. Homodimer. It depends on pyridoxal 5'-phosphate as a cofactor.

Its subcellular location is the cytoplasm. Its pathway is amino-acid biosynthesis; glycine biosynthesis; glycine from L-serine: step 1/1. In terms of biological role, catalyzes the reversible interconversion of serine and glycine with a modified folate serving as the one-carbon carrier. Also exhibits a pteridine-independent aldolase activity toward beta-hydroxyamino acids, producing glycine and aldehydes, via a retro-aldol mechanism. This is Serine hydroxymethyltransferase from Pyrococcus furiosus (strain ATCC 43587 / DSM 3638 / JCM 8422 / Vc1).